The following is a 338-amino-acid chain: Cytochrome c biogenesis protein CcsA (338 aa).

The next 8 membrane-spanning stretches (helical) occupy residues 15–35 (FLVL…PNIP), 36–56 (GLTG…ATLL), 71–91 (LYES…VAEW), 97–117 (WVGV…ALSL), 142–162 (VMMI…AFLI), 246–266 (IIGL…VWAN), 273–293 (WSWD…AAYL), and 307–327 (AFLA…VNIL).

It belongs to the CcmF/CycK/Ccl1/NrfE/CcsA family. As to quaternary structure, may interact with ccs1.

It is found in the cellular thylakoid membrane. In terms of biological role, required during biogenesis of c-type cytochromes (cytochrome c6 and cytochrome f) at the step of heme attachment. The sequence is that of Cytochrome c biogenesis protein CcsA from Picosynechococcus sp. (strain ATCC 27264 / PCC 7002 / PR-6) (Agmenellum quadruplicatum).